The following is a 172-amino-acid chain: R-phycocyanin-2 beta chain (172 aa).

Asn72 is subject to N4-methylasparagine. Cys82 contributes to the (2R,3E)-phycocyanobilin binding site. A (2R,3E)-phycoerythrobilin-binding site is contributed by Cys153.

Belongs to the phycobiliprotein family. As to quaternary structure, heterodimer of an alpha and a beta chain. Contains two covalently linked bilin chromophores.

Its subcellular location is the cellular thylakoid membrane. Light-harvesting photosynthetic bile pigment-protein from the phycobiliprotein complex. The polypeptide is R-phycocyanin-2 beta chain (rpcB) (Synechococcus sp. (strain WH8020)).